A 159-amino-acid chain; its full sequence is Putative ribosomal RNA large subunit methyltransferase H (159 aa).

S-adenosyl-L-methionine contacts are provided by residues leucine 76, glycine 108, and 127–132 (LSPLTF).

The protein belongs to the RNA methyltransferase RlmH family.

Its subcellular location is the cytoplasm. It catalyses the reaction pseudouridine(1915) in 23S rRNA + S-adenosyl-L-methionine = N(3)-methylpseudouridine(1915) in 23S rRNA + S-adenosyl-L-homocysteine + H(+). Its function is as follows. Specifically methylates the pseudouridine at position 1915 (m3Psi1915) in 23S rRNA. This chain is Putative ribosomal RNA large subunit methyltransferase H, found in Methanoregula boonei (strain DSM 21154 / JCM 14090 / 6A8).